We begin with the raw amino-acid sequence, 477 residues long: Aspartyl/glutamyl-tRNA(Asn/Gln) amidotransferase subunit B (477 aa).

Belongs to the GatB/GatE family. GatB subfamily. Heterotrimer of A, B and C subunits.

The catalysed reaction is L-glutamyl-tRNA(Gln) + L-glutamine + ATP + H2O = L-glutaminyl-tRNA(Gln) + L-glutamate + ADP + phosphate + H(+). It catalyses the reaction L-aspartyl-tRNA(Asn) + L-glutamine + ATP + H2O = L-asparaginyl-tRNA(Asn) + L-glutamate + ADP + phosphate + 2 H(+). Allows the formation of correctly charged Asn-tRNA(Asn) or Gln-tRNA(Gln) through the transamidation of misacylated Asp-tRNA(Asn) or Glu-tRNA(Gln) in organisms which lack either or both of asparaginyl-tRNA or glutaminyl-tRNA synthetases. The reaction takes place in the presence of glutamine and ATP through an activated phospho-Asp-tRNA(Asn) or phospho-Glu-tRNA(Gln). In Legionella pneumophila (strain Lens), this protein is Aspartyl/glutamyl-tRNA(Asn/Gln) amidotransferase subunit B.